We begin with the raw amino-acid sequence, 488 residues long: 5'-3' exonuclease PLD3 (488 aa).

The Cytoplasmic portion of the chain corresponds to 1–38 (MKPKLMYQELKVPVEEPAGELPMNEIEAWKAAEKKARW). Residues 39–59 (VLLVLILAVVGFGALMTQLFL) form a helical; Signal-anchor for type II membrane protein membrane-spanning segment. Residues 60-488 (WEYGDLHLFG…DSVGNACRLL (429 aa)) are Lumenal-facing. 2 disulfide bridges follow: Cys77/Cys237 and Cys81/Cys235. N-linked (GlcNAc...) asparagine glycans are attached at residues Asn97 and Asn132. The PLD phosphodiesterase 1 domain occupies 194 to 221 (THGVLHTKFWVVDQTHFYLGSANMDWRS). Residues His199, Lys201, and Asp206 contribute to the active site. His199 serves as the catalytic Proton donor. Phosphate-binding residues include His199 and Lys201. Residue Asn216 coordinates phosphate. N-linked (GlcNAc...) asparagine glycosylation is found at Asn234, Asn282, and Asn385. Residues Cys364 and Cys485 are joined by a disulfide bond. One can recognise a PLD phosphodiesterase 2 domain in the interval 409–435 (YARVNHNKYMVTERTTYIGTSNWSGSY). His414 contacts phosphate. The active-site Nucleophile is the His414. Phe436 provides a ligand contact to Mg(2+).

The protein belongs to the phospholipase D family. In terms of assembly, homodimer. Interacts with APP. N-glycosylated. In terms of processing, proteolytically processed to a soluble form that is stable within endosomes and lysosomes. During transport through the secretory pathway becomes proteolysed by cysteine proteases, thereby releasing a stable soluble lysosomal lumenal polypeptide, whereas the transmembrane-bound fragment is rapidly degraded. Its transport route to lysosomes involves ubiquitination and the ESCRT complex. Post-translationally, ubiquitinated. Ubiquitination mediates sorting into lysosomes.

The protein resides in the endoplasmic reticulum membrane. It is found in the lysosome lumen. The protein localises to the early endosome membrane. Its subcellular location is the late endosome membrane. It localises to the golgi apparatus membrane. The protein resides in the endosome membrane. It catalyses the reaction Exonucleolytic cleavage in the 5'- to 3'-direction to yield nucleoside 3'-phosphates.. The catalysed reaction is a 5'-end 5'-dephospho-ribonucleotidyl-ribonucleotide-RNA + H2O = a ribonucleoside 3'-phosphate + a 5'-end dephospho-ribonucleoside-RNA + H(+). It carries out the reaction a ribonucleoside 3'-phosphate-2'-3'-cyclophospho-GMP + H2O = a ribonucleoside 3'-phosphate + 2',3'-cyclophospho-GMP + H(+). The enzyme catalyses a 5'-end 5'-dephospho-2'-deoxyribonucleotidyl-2'-deoxyribonucleotide in single-stranded DNA + H2O = a 5'-end dephospho-2'-deoxyribonucleoside in single-stranded DNA + a 2'-deoxyribonucleoside 3'-phosphate + H(+). It catalyses the reaction a 5'-end 5'-phospho-2'-deoxyribonucleotide in single-stranded DNA + H2O = a 5'-end 5'-dephospho-2'-deoxyribonucleotide in single-stranded DNA + phosphate. The catalysed reaction is a 3-lyso-sn-glycero-1-phospho-(3'-acyl-1'-sn-glycerol) + a 1-acyl-sn-glycerol = a 3-acyl-sn-glycero-1-phospho-(3'-acyl-1'-sn-glycerol) + glycerol. It carries out the reaction 3-lyso-sn-glycero-1-phospho-(3'-(9Z-octadecenoyl)-1'-sn-glycerol) + 1-(9Z-octadecenoyl)-sn-glycerol = 3-(9Z-octadecenoyl)-sn-glycero-1-phospho-(3'-(9Z-octadecenoyl)-1'-sn-glycerol) + glycerol. 5'-&gt;3' exonuclease that hydrolyzes the phosphodiester bond of single-stranded DNA (ssDNA) and RNA molecules to form nucleoside 3'-monophosphates and 5'-end 5'-hydroxy deoxyribonucleotide/ribonucleotide fragments. Partially redundant with PLD4, can cleave all four nucleotides displaying higher efficiency for ssDNA and RNA fragments initiated with uridine and guanosine residues and lower efficiency for cytidine-initiated substrates. As a result, it does not always degrade polynucleotides to the single nucleotide level, it can stall at specific sites sparing certain fragments from exonucleolytic degradation. Processes self and pathogenic ssDNA and RNA molecules that reach the endolysosomal compartment via phagocytosis or autophagy and may serve as 'danger' signals for recognition by innate immune receptors such as toll-like receptors (TLRs). Degrades mitochondrial CpG-rich ssDNA fragments to prevent TLR9 activation and autoinflammatory response, but it can cleave viral RNA to generate ligands for TLR7 activation and initiate antiviral immune responses. In plasmacytoid dendritic cells, it cooperates with endonuclease RNASET2 to release 2',3'-cyclic guanosine monophosphate (2',3'-cGMP), a potent stimulatory ligand for TLR7. Produces 2',3'-cGMPs and cytidine-rich RNA fragments that occupy TLR7 ligand-binding pockets and trigger a signaling-competent state. Can exert polynucleotide phosphatase activity toward 5'-phosphorylated ssDNA substrates although at a slow rate. Transphosphatidylase that catalyzes the exchange with R to S stereo-inversion of the glycerol moiety between (S,R)-lysophosphatidylglycerol (LPG) and monoacylglycerol (MAG) substrates to yield (S,S)-bis(monoacylglycero)phosphate (BMP). Can synthesize a variety of (S,S)-BMPs representing the main phospholipid constituent of lysosomal intralumenal vesicle (ILV) membranes that bind acid hydrolases for lipid degradation. Regulates the homeostasis and interorganellar communication of the endolysosomal system with an overall impact on cellular removal of dysfunctional organelles via autophagy as well as proper protein and lipid turnover. May play a role in myotube formation in response to ER stress. In Rattus norvegicus (Rat), this protein is 5'-3' exonuclease PLD3 (Pld3).